Reading from the N-terminus, the 106-residue chain is Small membrane A-kinase anchor protein (106 aa).

Residue G2 is the site of N-myristoyl glycine attachment. The S-palmitoyl cysteine moiety is linked to residue C3. S40 is modified (phosphoserine). The segment at 62-85 (ALILEFADRLASEIVEDALQQWAC) is PKA-RI-binding. A Phosphoserine modification is found at S98.

The protein belongs to the small membrane AKAP family. In terms of assembly, interacts with PKA type I regulatory subunits PRKAR1A and PRKAR1B. Also binds to type II regulatory subunits, but at a tenfold lower affinity. In terms of processing, may be palmitoylated at Cys-3. As to expression, widely expressed, with very low levels in spleen and liver.

Its subcellular location is the cell membrane. Its function is as follows. Binds to type I regulatory subunits of protein kinase A (PKA-RI) and may anchor/target them to the plasma membrane. This Mus musculus (Mouse) protein is Small membrane A-kinase anchor protein.